A 416-amino-acid chain; its full sequence is MRKADLVVGVQWGDEGKGKIVDMLGLNYDMICRSQGGHNAGHTIWVDGVRYAMHLIPSGILHKNIVNVIGNGVVVSPDVLIDEMAQFDHLEGRFYISDRAHLNLTHHGLIDQAKERLKGDKAIGTTGKGIGPTYADKISRSGHRVGELLEPERLCEALMSDFEMNKSLFNALGVKIPKRDELLEELKRYKEALAPYITNTTRLVWKALDDGKKVLLEGAQGTLLDIDHGTYPYVTSSNTISAGACTGLGLNPKEMGEVIGVIKAYTTRVGFGPFPTEDKGSDGDKMCEVGKEFGTTTGRRRRCGWFDAVSVKYASRLDAVDKYALMKLDVLDGFEVVKICKAYQYNGETIDYVPTDLENVTPIYEDLEGWDSVKGVTRYDDLPKNAKRYIERIEELTGVKVGLISTSPERSDTIIR.

GTP contacts are provided by residues 13 to 19 (GDEGKGK) and 41 to 43 (GHT). Asp-14 serves as the catalytic Proton acceptor. Mg(2+) contacts are provided by Asp-14 and Gly-41. IMP-binding positions include 14–17 (DEGK), 39–42 (NAGH), Thr-126, Arg-140, Gln-220, Thr-235, and Arg-299. His-42 functions as the Proton donor in the catalytic mechanism. 295–301 (TTTGRRR) provides a ligand contact to substrate. Residues Arg-301, 327 to 329 (KLD), and 405 to 407 (STS) each bind GTP.

Belongs to the adenylosuccinate synthetase family. In terms of assembly, homodimer. Mg(2+) serves as cofactor.

It is found in the cytoplasm. The catalysed reaction is IMP + L-aspartate + GTP = N(6)-(1,2-dicarboxyethyl)-AMP + GDP + phosphate + 2 H(+). The protein operates within purine metabolism; AMP biosynthesis via de novo pathway; AMP from IMP: step 1/2. Functionally, plays an important role in the de novo pathway of purine nucleotide biosynthesis. Catalyzes the first committed step in the biosynthesis of AMP from IMP. This Campylobacter curvus (strain 525.92) protein is Adenylosuccinate synthetase.